Consider the following 382-residue polypeptide: Chorismate synthase (382 aa).

NADP(+)-binding residues include Arg39 and Arg45. Residues 127-129, 245-246, Gly290, 305-309, and Arg331 each bind FMN; these read RAS, QA, and KPIPT.

This sequence belongs to the chorismate synthase family. In terms of assembly, homotetramer. The cofactor is FMNH2.

The catalysed reaction is 5-O-(1-carboxyvinyl)-3-phosphoshikimate = chorismate + phosphate. Its pathway is metabolic intermediate biosynthesis; chorismate biosynthesis; chorismate from D-erythrose 4-phosphate and phosphoenolpyruvate: step 7/7. Functionally, catalyzes the anti-1,4-elimination of the C-3 phosphate and the C-6 proR hydrogen from 5-enolpyruvylshikimate-3-phosphate (EPSP) to yield chorismate, which is the branch point compound that serves as the starting substrate for the three terminal pathways of aromatic amino acid biosynthesis. This reaction introduces a second double bond into the aromatic ring system. The sequence is that of Chorismate synthase from Desulfitobacterium hafniense (strain Y51).